Consider the following 233-residue polypeptide: Esterase FUS5 (233 aa).

Residues Ser-105, Asp-159, and His-187 each act as charge relay system in the active site.

This sequence belongs to the LovG family.

Its function is as follows. Esterase; part of the gene cluster that mediates the biosynthesis of the mycotoxin fusarin C. Within the cluster, FUS1, FUS2, FUS8 and FUS9 are sufficient for fusarin production. The other FUS cluster members are not essential for fusarin C biosynthesis. The protein is Esterase FUS5 of Gibberella moniliformis (strain M3125 / FGSC 7600) (Maize ear and stalk rot fungus).